Consider the following 51-residue polypeptide: ATP synthase subunit epsilon-like protein, mitochondrial (51 aa).

K21 is subject to N6-acetyllysine.

It belongs to the eukaryotic ATPase epsilon family. F-type ATPases have 2 components, CF(1) - the catalytic core - and CF(0) - the membrane proton channel. CF(1) has five subunits: alpha(3), beta(3), gamma(1), delta(1), epsilon(1). CF(0) seems to have nine subunits: a, b, c, d, e, f, g, F6 and 8 (or A6L).

The protein resides in the mitochondrion inner membrane. In terms of biological role, mitochondrial membrane ATP synthase (F(1)F(0) ATP synthase or Complex V) produces ATP from ADP in the presence of a proton gradient across the membrane which is generated by electron transport complexes of the respiratory chain. F-type ATPases consist of two structural domains, F(1) - containing the extramembraneous catalytic core, and F(0) - containing the membrane proton channel, linked together by a central stalk and a peripheral stalk. During catalysis, ATP synthesis in the catalytic domain of F(1) is coupled via a rotary mechanism of the central stalk subunits to proton translocation. Part of the complex F(1) domain and of the central stalk which is part of the complex rotary element. Rotation of the central stalk against the surrounding alpha(3)beta(3) subunits leads to hydrolysis of ATP in three separate catalytic sites on the beta subunits. In Homo sapiens (Human), this protein is ATP synthase subunit epsilon-like protein, mitochondrial.